A 250-amino-acid polypeptide reads, in one-letter code: Urease accessory protein UreG 3 (250 aa).

The tract at residues 1–24 is disordered; that stretch reads MPDNASAQQPGQPAQGPNEHYHQP. Over residues 7–17 the composition is skewed to low complexity; the sequence is AQQPGQPAQGP. 37–44 provides a ligand contact to GTP; sequence GPVGTGKS. A disordered region spans residues 230–250; the sequence is GTHVPTDPGPMAPHSHSHDGS.

Belongs to the SIMIBI class G3E GTPase family. UreG subfamily. As to quaternary structure, homodimer. UreD, UreF and UreG form a complex that acts as a GTP-hydrolysis-dependent molecular chaperone, activating the urease apoprotein by helping to assemble the nickel containing metallocenter of UreC. The UreE protein probably delivers the nickel.

It is found in the cytoplasm. Its function is as follows. Facilitates the functional incorporation of the urease nickel metallocenter. This process requires GTP hydrolysis, probably effectuated by UreG. The protein is Urease accessory protein UreG 3 of Streptomyces griseus subsp. griseus (strain JCM 4626 / CBS 651.72 / NBRC 13350 / KCC S-0626 / ISP 5235).